Consider the following 462-residue polypeptide: MADAPGLIPIFLLGYLLSTECAVFLDRENATKILTRPKRYNSGKLEEFVQGNLERECIEERCSFEEAREVFENTEKTTEFWKQYVDGDQCESNPCLNGGICKDDINSYECWCQAGFEGRNCELDATCSIKNGRCKQFCKNSPDNKIICSCTEGYQLAEDQKSCEPAVPFPCGRVSVAYNSKKITRAETVFSNTDYGNSTELILDDITNSTILDNLTENSEPINDFTRVVGGENAKPGQIPWQVILNGEIEAFCGGAIINEKWIVTAAHCLKPGDKIEVVAGEHNIDEKEDTEQRRNVIRTIPHHQYNATINKYSHDIALLELDKPLILNSYVTPICVANKEYTNIFLKFGSGYVSGWGKVFNKGRQASILQYLRVPLVDRATCLRSTKFSIYNNMFCAGYREGGKDSCEGDSGGPHVTEVEGTSFLTGIISWGEECAMKGKYGIYTKVSRYVNWIKEKTKLT.

A signal peptide spans 1 to 21 (MADAPGLIPIFLLGYLLSTEC). A propeptide spanning residues 22–39 (AVFLDRENATKILTRPKR) is cleaved from the precursor. Residues Tyr40, Asn41, Glu46, Glu47, Glu54, Glu56, Glu59, Glu60, Glu65, Glu66, and Glu69 each contribute to the Ca(2+) site. One can recognise a Gla domain in the interval 40–86 (YNSGKLEEFVQGNLERECIEERCSFEEAREVFENTEKTTEFWKQYVD). Glu46, Glu47, Glu54, Glu56, Glu59, Glu60, Glu65, Glu66, Glu69, Glu72, and Glu75 each carry 4-carboxyglutamate. Glu54 lines the Mg(2+) pocket. A disulfide bridge connects residues Cys57 and Cys62. Glu59 contributes to the Mg(2+) binding site. Glu65 contacts Mg(2+). Position 69 (Glu69) interacts with Mg(2+). Position 75 (Glu75) interacts with Ca(2+). Glu75 contributes to the Mg(2+) binding site. Thr78 is a glycosylation site (O-linked (GalNAc...) threonine). 4 residues coordinate Ca(2+): Glu79, Asp86, Gly87, and Gln89. A 4-carboxyglutamate modification is found at Glu79. Glu79 lines the Mg(2+) pocket. Residues 86–122 (DGDQCESNPCLNGGICKDDINSYECWCQAGFEGRNCE) enclose the EGF-like; calcium-binding domain. Intrachain disulfides connect Cys90/Cys101, Cys95/Cys110, Cys112/Cys121, Cys127/Cys138, Cys134/Cys148, Cys150/Cys163, Cys171/Cys336, Cys253/Cys269, Cys383/Cys397, and Cys408/Cys436. Residue Ser92 is glycosylated (O-linked (Glc...) serine). Positions 103 and 104 each coordinate Ca(2+). Asp103 is subject to (3R)-3-hydroxyaspartate. Ser107 carries the post-translational modification Phosphoserine. Positions 186–227 (AETVFSNTDYGNSTELILDDITNSTILDNLTENSEPINDFTR) are cleaved as a propeptide — activation peptide. Tyr195 bears the Sulfotyrosine mark. Ser198 carries the post-translational modification Phosphoserine. Thr199 is subject to Phosphothreonine; alternate. Thr199 carries an O-linked (GalNAc...) threonine; alternate glycan. 2 N-linked (GlcNAc...) asparagine glycosylation sites follow: Asn208 and Asn214. Thr216 and Thr226 each carry an O-linked (GalNAc...) threonine glycan. Residues 228–460 (VVGGENAKPG…YVNWIKEKTK (233 aa)) enclose the Peptidase S1 domain. His268 (charge relay system) is an active-site residue. Ca(2+) is bound by residues Glu282, Asn284, Glu287, Glu289, and Glu292. Asn307 carries N-linked (GlcNAc...) asparagine glycosylation. The active-site Charge relay system is the Asp316. Ser412 serves as the catalytic Charge relay system.

This sequence belongs to the peptidase S1 family. Heterodimer of a light chain and a heavy chain; disulfide-linked. Interacts (inactive and activated) with F11 (activated) in calcium-dependent manner. Interacts with SERPINC1. Interacts (inactive and activated) with nitrophorin-2, an anticoagulant protein from Rhodnius prolixus. Activated by factor XIa, which excises the activation peptide. The propeptide can also be removed by snake venom protease. Activated by coagulation factor VIIa-tissue factor (F7-F3) complex in calcium-dependent manner. In terms of processing, the iron and 2-oxoglutarate dependent 3-hydroxylation of aspartate and asparagine is (R) stereospecific within EGF domains. Post-translationally, predominantly O-glucosylated at Ser-92 by POGLUT1 in vitro.

It is found in the secreted. The catalysed reaction is Selective cleavage of Arg-|-Ile bond in factor X to form factor Xa.. Factor IX is a vitamin K-dependent plasma protein that participates in the intrinsic pathway of blood coagulation by converting factor X to its active form in the presence of Ca(2+) ions, phospholipids, and factor VIIIa. This is Coagulation factor IX (F9) from Rattus norvegicus (Rat).